Reading from the N-terminus, the 428-residue chain is Enolase (428 aa).

(2R)-2-phosphoglycerate is bound at residue glutamine 163. Glutamate 205 functions as the Proton donor in the catalytic mechanism. Mg(2+) is bound by residues aspartate 242, glutamate 285, and aspartate 312. Lysine 337, arginine 366, serine 367, and lysine 388 together coordinate (2R)-2-phosphoglycerate. Catalysis depends on lysine 337, which acts as the Proton acceptor.

The protein belongs to the enolase family. Mg(2+) serves as cofactor.

It is found in the cytoplasm. The protein resides in the secreted. It localises to the cell surface. It carries out the reaction (2R)-2-phosphoglycerate = phosphoenolpyruvate + H2O. It functions in the pathway carbohydrate degradation; glycolysis; pyruvate from D-glyceraldehyde 3-phosphate: step 4/5. In terms of biological role, catalyzes the reversible conversion of 2-phosphoglycerate (2-PG) into phosphoenolpyruvate (PEP). It is essential for the degradation of carbohydrates via glycolysis. The protein is Enolase of Novosphingobium aromaticivorans (strain ATCC 700278 / DSM 12444 / CCUG 56034 / CIP 105152 / NBRC 16084 / F199).